We begin with the raw amino-acid sequence, 474 residues long: tRNA-2-methylthio-N(6)-dimethylallyladenosine synthase (474 aa).

An MTTase N-terminal domain is found at 3-120; sequence QKLHIKTWGC…LPEMINQIRA (118 aa). Cys12, Cys49, Cys83, Cys157, Cys161, and Cys164 together coordinate [4Fe-4S] cluster. Residues 143-375 form the Radical SAM core domain; the sequence is KAEGPTAFVS…QQRINNQAAQ (233 aa). One can recognise a TRAM domain in the interval 378–441; it reads RAMLGTEQRV…TNSLRGDVVR (64 aa).

It belongs to the methylthiotransferase family. MiaB subfamily. Monomer. The cofactor is [4Fe-4S] cluster.

The protein resides in the cytoplasm. It catalyses the reaction N(6)-dimethylallyladenosine(37) in tRNA + (sulfur carrier)-SH + AH2 + 2 S-adenosyl-L-methionine = 2-methylsulfanyl-N(6)-dimethylallyladenosine(37) in tRNA + (sulfur carrier)-H + 5'-deoxyadenosine + L-methionine + A + S-adenosyl-L-homocysteine + 2 H(+). In terms of biological role, catalyzes the methylthiolation of N6-(dimethylallyl)adenosine (i(6)A), leading to the formation of 2-methylthio-N6-(dimethylallyl)adenosine (ms(2)i(6)A) at position 37 in tRNAs that read codons beginning with uridine. The protein is tRNA-2-methylthio-N(6)-dimethylallyladenosine synthase of Mannheimia succiniciproducens (strain KCTC 0769BP / MBEL55E).